The sequence spans 307 residues: Mycothiol acetyltransferase (307 aa).

2 consecutive N-acetyltransferase domains span residues 12–152 (TRTD…APIP) and 160–307 (VTLR…YQRS). Glu43 lines the 1D-myo-inositol 2-(L-cysteinylamino)-2-deoxy-alpha-D-glucopyranoside pocket. 87-89 (LAV) lines the acetyl-CoA pocket. 3 residues coordinate 1D-myo-inositol 2-(L-cysteinylamino)-2-deoxy-alpha-D-glucopyranoside: Glu187, Lys227, and Glu239. Acetyl-CoA contacts are provided by residues 243 to 245 (LGV) and 250 to 256 (HGGGLGK). Tyr278 serves as a coordination point for 1D-myo-inositol 2-(L-cysteinylamino)-2-deoxy-alpha-D-glucopyranoside.

Belongs to the acetyltransferase family. MshD subfamily. As to quaternary structure, monomer.

It carries out the reaction 1D-myo-inositol 2-(L-cysteinylamino)-2-deoxy-alpha-D-glucopyranoside + acetyl-CoA = mycothiol + CoA + H(+). Catalyzes the transfer of acetyl from acetyl-CoA to desacetylmycothiol (Cys-GlcN-Ins) to form mycothiol. This Salinispora arenicola (strain CNS-205) protein is Mycothiol acetyltransferase.